The chain runs to 314 residues: Transcriptional activator RhrA (314 aa).

Residues 210 to 310 (ASIKMRVEQN…GVRPSDLRRL (101 aa)) enclose the HTH araC/xylS-type domain. 2 DNA-binding regions (H-T-H motif) span residues 228–249 (TDVA…SREG) and 277–300 (ISQI…RSRY).

Functionally, transcriptional activator of the rhizobactin regulon. In Rhizobium meliloti (strain 1021) (Ensifer meliloti), this protein is Transcriptional activator RhrA (rhrA).